A 182-amino-acid polypeptide reads, in one-letter code: Large ribosomal subunit protein uL6 (182 aa).

It belongs to the universal ribosomal protein uL6 family. Part of the 50S ribosomal subunit.

Its function is as follows. This protein binds to the 23S rRNA, and is important in its secondary structure. It is located near the subunit interface in the base of the L7/L12 stalk, and near the tRNA binding site of the peptidyltransferase center. In Methanococcus maripaludis (strain C7 / ATCC BAA-1331), this protein is Large ribosomal subunit protein uL6.